The primary structure comprises 265 residues: Putative 2-aminoethylphosphonate transport system permease protein PhnV (265 aa).

6 helical membrane passes run 13 to 33, 69 to 89, 104 to 124, 131 to 151, 185 to 205, and 233 to 253; these read GVVASVLFIVFFFLPLAVILM, LTIGFCASLFALLCGVWAALA, VFYLPSAIPSVSVGLGILVAF, MNGTLWIVLTAHFVLISAFTF, LPLLMPWMVSALALSLSLSMG, and NIADGAALTIVLVAITLLLMM. In terms of domain architecture, ABC transmembrane type-1 spans 65–253; it reads LLASLTIGFC…LVAITLLLMM (189 aa).

It belongs to the binding-protein-dependent transport system permease family.

The protein resides in the cell inner membrane. Functionally, probably part of the PhnSTUV complex (TC 3.A.1.11.5) involved in 2-aminoethylphosphonate import. Probably responsible for the translocation of the substrate across the membrane. In Salmonella paratyphi A (strain ATCC 9150 / SARB42), this protein is Putative 2-aminoethylphosphonate transport system permease protein PhnV (phnV).